We begin with the raw amino-acid sequence, 598 residues long: UvrABC system protein C (598 aa).

A GIY-YIG domain is found at 13–92 (SSPGVYLMKD…IKKYQPRYNV (80 aa)). The UVR domain maps to 206-241 (RSTISNLEKAIEKASQEQKFEHAAALYRTLTLIRQT).

It belongs to the UvrC family. As to quaternary structure, interacts with UvrB in an incision complex.

The protein localises to the cytoplasm. Functionally, the UvrABC repair system catalyzes the recognition and processing of DNA lesions. UvrC both incises the 5' and 3' sides of the lesion. The N-terminal half is responsible for the 3' incision and the C-terminal half is responsible for the 5' incision. This is UvrABC system protein C from Chlamydia trachomatis serovar A (strain ATCC VR-571B / DSM 19440 / HAR-13).